The primary structure comprises 344 residues: Sulfate/thiosulfate import ATP-binding protein CysA (344 aa).

The 235-residue stretch at 3-237 (IEVRNLVKKF…PATAFVHGFI (235 aa)) folds into the ABC transporter domain. 35–42 (GPSGSGKT) contributes to the ATP binding site.

It belongs to the ABC transporter superfamily. Sulfate/tungstate importer (TC 3.A.1.6) family. The complex is composed of two ATP-binding proteins (CysA), two transmembrane proteins (CysT and CysW) and a solute-binding protein (CysP).

It localises to the cell inner membrane. It carries out the reaction sulfate(out) + ATP + H2O = sulfate(in) + ADP + phosphate + H(+). The catalysed reaction is thiosulfate(out) + ATP + H2O = thiosulfate(in) + ADP + phosphate + H(+). Functionally, part of the ABC transporter complex CysAWTP involved in sulfate/thiosulfate import. Responsible for energy coupling to the transport system. The protein is Sulfate/thiosulfate import ATP-binding protein CysA of Bradyrhizobium diazoefficiens (strain JCM 10833 / BCRC 13528 / IAM 13628 / NBRC 14792 / USDA 110).